A 275-amino-acid polypeptide reads, in one-letter code: Nuclear egress protein 2 (275 aa).

Over 1 to 251 (MDSYNYRDFA…SERVKRRPVR (251 aa)) the chain is Perinuclear space. The segment at 197 to 221 (CDRSNGIVSPREHRECRERQKRRPT) is disordered. A helical membrane pass occupies residues 252-272 (IAAAILAFVFVAVILAIATKG). Residues 273 to 275 (RLF) lie on the Nuclear side of the membrane.

Belongs to the herpesviridae NEC2 protein family. As to quaternary structure, forms a heterohexameric complex with NEC1. In terms of processing, phosphorylated.

The protein resides in the host nucleus inner membrane. Plays an essential role in virion nuclear egress, the first step of virion release from infected cell. Within the host nucleus, NEC1 interacts with the newly formed capsid through the vertexes and directs it to the inner nuclear membrane by associating with NEC2. Induces the budding of the capsid at the inner nuclear membrane as well as its envelopment into the perinuclear space. There, the NEC1/NEC2 complex promotes the fusion of the enveloped capsid with the outer nuclear membrane and the subsequent release of the viral capsid into the cytoplasm where it will reach the secondary budding sites in the host Golgi or trans-Golgi network. This Equus caballus (Horse) protein is Nuclear egress protein 2.